A 520-amino-acid polypeptide reads, in one-letter code: Chaperone Ric-8B (520 aa).

A Phosphoserine modification is found at Ser468. At Thr473 the chain carries Phosphothreonine.

Belongs to the synembryn family. Interacts with GDP-bound G(s) G-alpha proteins GNAL and GNAS. Does not interact with G-alpha proteins when they are in complex with subunits beta and gamma.

Its subcellular location is the cytoplasm. The protein resides in the cell cortex. Its function is as follows. Chaperone that specifically binds and folds nascent G(s) G-alpha proteins (GNAS and GNAL) prior to G protein heterotrimer formation, promoting their association with the plasma membrane. Also acts as a guanine nucleotide exchange factor (GEF) for G(s) proteins by stimulating exchange of bound GDP for free GTP. Acts as an important component for odorant signal transduction by mediating GNAL (G(olf)-alpha) folding, thereby promoting-dependent cAMP accumulation in olfactory sensory neurons. This Rattus norvegicus (Rat) protein is Chaperone Ric-8B (Ric8b).